The sequence spans 362 residues: Heme A synthase (362 aa).

5 helical membrane passes run 12–32, 102–122, 128–148, 159–179, and 198–218; these read AVKI…LVGG, VIGL…HLGG, LWLI…MVAS, ERLA…VWTL, and AAAL…VAGL. Position 262 (His262) interacts with heme. Transmembrane regions (helical) follow at residues 264–286, 291–311, and 314–334; these read MLAY…ARAG, GAVW…FTLL, and VPIG…MLGV. His322 provides a ligand contact to heme.

This sequence belongs to the COX15/CtaA family. Type 2 subfamily. Interacts with CtaB. It depends on heme b as a cofactor.

The protein localises to the cell membrane. The catalysed reaction is Fe(II)-heme o + 2 A + H2O = Fe(II)-heme a + 2 AH2. The protein operates within porphyrin-containing compound metabolism; heme A biosynthesis; heme A from heme O: step 1/1. Functionally, catalyzes the conversion of heme O to heme A by two successive hydroxylations of the methyl group at C8. The first hydroxylation forms heme I, the second hydroxylation results in an unstable dihydroxymethyl group, which spontaneously dehydrates, resulting in the formyl group of heme A. This Rhodopseudomonas palustris (strain BisA53) protein is Heme A synthase.